We begin with the raw amino-acid sequence, 454 residues long: CCA-adding enzyme (454 aa).

Ser59 and Arg62 together coordinate ATP. Positions 59 and 62 each coordinate CTP. Mg(2+) is bound by residues Asp71, Asp73, and Asp125. The ATP site is built by His148, Lys167, and Tyr176. Residues His148, Lys167, and Tyr176 each contribute to the CTP site.

The protein belongs to the tRNA nucleotidyltransferase/poly(A) polymerase family. Archaeal CCA-adding enzyme subfamily. In terms of assembly, homodimer. The cofactor is Mg(2+).

It carries out the reaction a tRNA precursor + 2 CTP + ATP = a tRNA with a 3' CCA end + 3 diphosphate. The catalysed reaction is a tRNA with a 3' CCA end + 2 CTP + ATP = a tRNA with a 3' CCACCA end + 3 diphosphate. Its function is as follows. Catalyzes the addition and repair of the essential 3'-terminal CCA sequence in tRNAs without using a nucleic acid template. Adds these three nucleotides in the order of C, C, and A to the tRNA nucleotide-73, using CTP and ATP as substrates and producing inorganic pyrophosphate. tRNA 3'-terminal CCA addition is required both for tRNA processing and repair. Also involved in tRNA surveillance by mediating tandem CCA addition to generate a CCACCA at the 3' terminus of unstable tRNAs. While stable tRNAs receive only 3'-terminal CCA, unstable tRNAs are marked with CCACCA and rapidly degraded. The chain is CCA-adding enzyme from Methanosarcina acetivorans (strain ATCC 35395 / DSM 2834 / JCM 12185 / C2A).